The sequence spans 762 residues: ATP-dependent RNA helicase SUV3 homolog, mitochondrial (762 aa).

The transit peptide at 1–36 directs the protein to the mitochondrion; it reads MQNTRRCISLICVTRQPPSLRATYGAVAAARCLHRA. In terms of domain architecture, Helicase ATP-binding spans 181–321; that stretch reads NARALTRKIV…ALELLQKICE (141 aa). Residue 194–201 participates in ATP binding; the sequence is GPTNSGKT. Residues 331 to 508 enclose the Helicase C-terminal domain; that stretch reads RYDRLTELTV…PTADQIELYA (178 aa). The disordered stretch occupies residues 716–762; that stretch reads EWDAQQVGQAAAASTSSKESQESPPDDSDDEDSYPGSYKKTRRKRRK. Residues 721 to 730 show a composition bias toward polar residues; the sequence is QVGQAAAAST. The span at 739–748 shows a compositional bias: acidic residues; that stretch reads PPDDSDDEDS.

Belongs to the helicase family. It depends on Mg(2+) as a cofactor. The cofactor is Mn(2+).

It localises to the mitochondrion. It carries out the reaction ATP + H2O = ADP + phosphate + H(+). Major helicase player in mitochondrial RNA metabolism and maintenance. Likely component of the mitochondrial degradosome (mtEXO) complex, that degrades 3' overhang double-stranded RNA with a 3'-to-5' directionality in an ATP-dependent manner. ATPase and ATP-dependent multisubstrate helicase, able to unwind double-stranded (ds) DNA and RNA, and RNA/DNA heteroduplexes in the 5'-to-3' direction. Regulates mRNA stability and is required for the correct processing and maturation of mitochondrial transcripts. In Drosophila pseudoobscura pseudoobscura (Fruit fly), this protein is ATP-dependent RNA helicase SUV3 homolog, mitochondrial.